Consider the following 199-residue polypeptide: Transgelin-2 (199 aa).

Ala2 bears the N-acetylalanine mark. Ser11 is subject to Phosphoserine. An N6-acetyllysine mark is found at Lys17 and Lys20. A Calponin-homology (CH) domain is found at 24–136 (PDLEQILIQW…RTLMNLGGLA (113 aa)). A Phosphoserine modification is found at Ser163. Residue Lys171 forms a Glycyl lysine isopeptide (Lys-Gly) (interchain with G-Cter in SUMO2) linkage. The Calponin-like repeat unit spans residues 174–199 (IGLQMGTNRGASQAGMTGYGMPRQIL). The residue at position 180 (Thr180) is a Phosphothreonine. Arg182 and Arg196 each carry omega-N-methylarginine.

The protein belongs to the calponin family.

This Rattus norvegicus (Rat) protein is Transgelin-2 (Tagln2).